Consider the following 390-residue polypeptide: Prostaglandin E2 receptor EP3 subtype (390 aa).

The Extracellular segment spans residues 1–53; the sequence is MKETRGYGGDAPFCTRLNHSYTGMWAPERSAEARGNLTRPPGSGEDCGSVSVA. N-linked (GlcNAc...) asparagine glycans are attached at residues asparagine 18 and asparagine 36. The helical transmembrane segment at 54–78 threads the bilayer; that stretch reads FPITMLLTGFVGNALAMLLVSRSYR. The Cytoplasmic portion of the chain corresponds to 79–91; the sequence is RRESKRKKSFLLC. A helical transmembrane segment spans residues 92 to 112; the sequence is IGWLALTDLVGQLLTTPVVIV. Residues 113 to 131 lie on the Extracellular side of the membrane; the sequence is VYLSKQRWEHIDPSGRLCT. A helical transmembrane segment spans residues 132 to 153; sequence FFGLTMTVFGLSSLFIASAMAV. The Cytoplasmic portion of the chain corresponds to 154 to 175; the sequence is ERALAIRAPHWYASHMKTRATR. The chain crosses the membrane as a helical span at residues 176 to 197; the sequence is AVLLGVWLAVLAFALLPVLGVG. Topologically, residues 198–227 are extracellular; it reads QYTVQWPGTWCFISTGRGGNGTSSSHNWGN. Residues 228-253 traverse the membrane as a helical segment; the sequence is LFFASAFAFLGLLALTVTFSCNLATI. Topologically, residues 254-283 are cytoplasmic; sequence KALVSRCRAKATASQSSAQWGRITTETAIQ. Residues 284-307 traverse the membrane as a helical segment; that stretch reads LMGIMCVLSVCWSPLLIMMLKMIF. The Extracellular segment spans residues 308–327; it reads NQTSVEHCKTHTEKQKECNF. A helical membrane pass occupies residues 328–349; sequence FLIAVRLASLNQILDPWVYLLL. Residues 350-390 lie on the Cytoplasmic side of the membrane; sequence RKILLRKFCQIRYHTNNYASSSTSLPCQCSSTLMWSDHLER.

Belongs to the G-protein coupled receptor 1 family. As to quaternary structure, interacts (via C-terminus) with MKLN1. As to expression, detected in kidney. Expressed in small intestine, heart, pancreas, gastric fundic mucosa, mammary artery and pulmonary vessels.

It localises to the cell membrane. Functionally, receptor for prostaglandin E2 (PGE2). The activity of this receptor can couple to both the inhibition of adenylate cyclase mediated by G(i) proteins, and to an elevation of intracellular calcium. Required for normal development of fever in response to pyrinogens, including IL1B, prostaglandin E2 and bacterial lipopolysaccharide (LPS). Required for normal potentiation of platelet aggregation by prostaglandin E2, and thus plays a role in the regulation of blood coagulation. Required for increased HCO3(-) secretion in the duodenum in response to mucosal acidification, and thereby contributes to the protection of the mucosa against acid-induced ulceration. Not required for normal kidney function, normal urine volume and osmolality. This chain is Prostaglandin E2 receptor EP3 subtype (PTGER3), found in Homo sapiens (Human).